The sequence spans 107 residues: Probable monothiol glutaredoxin 2 (107 aa).

The region spanning 7-107 (FKFIENEIKN…LEKMLKAYTR (101 aa)) is the Glutaredoxin domain. Lys-24 is a binding site for glutathione. Position 32 (Cys-32) interacts with [2Fe-2S] cluster. Glutathione-binding positions include Arg-61, Phe-73, and 86-87 (CD).

It belongs to the glutaredoxin family. Monothiol subfamily.

This is Probable monothiol glutaredoxin 2 (grxC2) from Rickettsia conorii (strain ATCC VR-613 / Malish 7).